Here is a 142-residue protein sequence, read N- to C-terminus: ATP synthase epsilon chain (142 aa).

Belongs to the ATPase epsilon chain family. As to quaternary structure, F-type ATPases have 2 components, CF(1) - the catalytic core - and CF(0) - the membrane proton channel. CF(1) has five subunits: alpha(3), beta(3), gamma(1), delta(1), epsilon(1). CF(0) has three main subunits: a, b and c.

The protein resides in the cell inner membrane. In terms of biological role, produces ATP from ADP in the presence of a proton gradient across the membrane. In Shewanella woodyi (strain ATCC 51908 / MS32), this protein is ATP synthase epsilon chain.